The sequence spans 118 residues: Holo-[acyl-carrier-protein] synthase (118 aa).

Mg(2+) contacts are provided by D8 and E58.

The protein belongs to the P-Pant transferase superfamily. AcpS family. Mg(2+) is required as a cofactor.

Its subcellular location is the cytoplasm. It catalyses the reaction apo-[ACP] + CoA = holo-[ACP] + adenosine 3',5'-bisphosphate + H(+). Its function is as follows. Transfers the 4'-phosphopantetheine moiety from coenzyme A to a Ser of acyl-carrier-protein. In Streptococcus pyogenes serotype M28 (strain MGAS6180), this protein is Holo-[acyl-carrier-protein] synthase.